The sequence spans 775 residues: GRIP and coiled-coil domain-containing protein 1 (775 aa).

Residues 13 to 61 are a coiled coil; sequence SKKDLLETIETQKKQLLQYQARLKDVVRAYKSLLKEKEALEASIKVLSV. Residues 84 to 93 are compositionally biased toward basic and acidic residues; it reads DDRCSTHSED. 2 disordered regions span residues 84 to 153 and 614 to 639; these read DDRC…AGGE and GLPGRRSPVGGGGPGDPADTSSSDSL. Composition is skewed to low complexity over residues 94 to 110, 133 to 147, and 629 to 638; these read STGTATSLDTAASLTST, ASWSESGVSSSSGDG, and DPADTSSSDS. A coiled-coil region spans residues 153–763; sequence EVDKRLHQLK…PEEKQVIMRL (611 aa). The region spanning 713 to 763 is the GRIP domain; sequence QSREGANLEYLKNIIYRFLTLPDSLGRQQTLTAILTILHFSPEEKQVIMRL.

The protein resides in the cytoplasm. The protein localises to the golgi apparatus membrane. Functionally, probably involved in maintaining Golgi structure. The protein is GRIP and coiled-coil domain-containing protein 1 (GCC1) of Homo sapiens (Human).